The following is a 772-amino-acid chain: Calcium-binding mitochondrial carrier protein (772 aa).

The segment at 1–377 (MFANRVRQAQ…SISDFEKSTG (377 aa)) is N-terminal domain. EF-hand domains follow at residues 132–165 (LDAD…ELMA), 166–201 (KPEA…SLDP), 235–270 (LQQE…VKLR), and 347–382 (ITPL…NINK). Positions 145, 147, 149, 151, 156, 179, 181, 183, 185, and 190 each coordinate Ca(2+). Residues D360, N362, D364, K366, and D371 each coordinate Ca(2+). The segment at 378–422 (LNINKIGGGTNYSDSYPSDSHVTIQNSSTTPSPSTPITNTAAAIA) is linker loop domain. The tract at residues 432 to 720 (AQQVLESIEN…KALLPDAEYK (289 aa)) is carrier domain. Solcar repeat units lie at residues 436-526 (LESI…LRDL), 535-616 (IYFP…MKTI), and 624-712 (LGPM…LQKA). Transmembrane regions (helical) follow at residues 442–459 (FALG…VYPI), 501–520 (GILP…LTVN), 545–558 (GFAG…TNPL), 591–610 (GAGA…FPTY), 630–647 (LLAG…VTPA), and 687–706 (GALA…LVSY). The tract at residues 721 to 772 (PPTNAPITQKDFDVIRGNTNTVQRVIDMESKFGTLHQTRDNNKSSNGGENKN) is C-terminal domain. A disordered region spans residues 751–772 (KFGTLHQTRDNNKSSNGGENKN). Low complexity predominate over residues 763–772 (KSSNGGENKN).

The protein belongs to the mitochondrial carrier (TC 2.A.29) family. Homodimer (via N-terminus).

It is found in the mitochondrion inner membrane. Its function is as follows. Mitochondrial and calcium-binding carrier that catalyzes the calcium-dependent exchange of cytoplasmic glutamate with mitochondrial aspartate across the mitochondrial inner membrane. The protein is Calcium-binding mitochondrial carrier protein (mcfO) of Dictyostelium discoideum (Social amoeba).